Consider the following 432-residue polypeptide: MQVSVETTQGLGRRVTITIAADSIETAVKSELVNVAKKVRIDGFRKGKVPMNIVAQRYGASVRQDVLGDLMSRNFVDAIIKEKINPAGAPNYVPGEYKVGEDFTYSVEFEVYPEVELTGLESIEVEKPVVEVTDADVDVMLDTLRKQQATWKEKDGAADAEDRVTIDFTGSVDGEEFEGGKATDFVLAMGQGRMIPGFEDGVKGHKAGEEFTIDVTFPEEYHAENLKGKAAKFVINLKKVEERELPELTEEFIKRFGVEDGSVAGLRAEVRKNMERELKGAVRNRVKSQAIEGLVKANDIDVPSALIDSEIDVLRRQAAQRFGGNEKQALELPRELFEEQAKRRVVVGLLLGEVIRTNELKADEERVKGLIEEMASAYEDPKEVIEFYSKNKELMDNMRNVALEEQAVEAVLAKAKVSEKATSFNELMNQQA.

Residues 161–246 form the PPIase FKBP-type domain; the sequence is EDRVTIDFTG…LKKVEERELP (86 aa).

Belongs to the FKBP-type PPIase family. Tig subfamily.

It is found in the cytoplasm. It carries out the reaction [protein]-peptidylproline (omega=180) = [protein]-peptidylproline (omega=0). In terms of biological role, involved in protein export. Acts as a chaperone by maintaining the newly synthesized protein in an open conformation. Functions as a peptidyl-prolyl cis-trans isomerase. The sequence is that of Trigger factor from Salmonella typhi.